The following is a 65-amino-acid chain: Dybowskin-2CDYa (65 aa).

An N-terminal signal peptide occupies residues 1–22; it reads MFTLKKSLLLLFFIGVIKLSLC. Positions 23–47 are excised as a propeptide; that stretch reads EEERNADDDERRDDPDEMDVEVENR. Residues 26-43 show a composition bias toward acidic residues; it reads RNADDDERRDDPDEMDVE. The tract at residues 26–65 is disordered; the sequence is RNADDDERRDDPDEMDVEVENRSAVGRHGRRFGLRKHRKH. Over residues 50–65 the composition is skewed to basic residues; sequence VGRHGRRFGLRKHRKH.

Belongs to the frog skin active peptide (FSAP) family. Brevinin subfamily. In terms of tissue distribution, expressed by the skin glands.

The protein localises to the secreted. Its function is as follows. Antimicrobial peptide. Has activity against the Gram-positive bacterium S.aureus (MIC=6 uM) and the Gram-negative bacterium E.coli (MIC=3 uM). Lacks hemolytic activity against human erythrocytes. The polypeptide is Dybowskin-2CDYa (Rana dybowskii (Dybovsky's frog)).